We begin with the raw amino-acid sequence, 2227 residues long: Genome polyprotein (2227 aa).

2 short sequence motifs ((L)YPX(n)L motif) span residues Y167 to L171 and Y200 to L205. Residues M766–Q836 are involved in P1-2A pentamerization. Residues V1010 to V1030 traverse the membrane as a helical segment. The segment at I1043–E1070 is membrane-penetrating ability. Residues K1127–F1152 are a coiled coil. An SF3 helicase domain is found at H1204–M1366. G1230–S1237 contributes to the ATP binding site. Residues W1462–Y1482 form a helical membrane-spanning segment. At Y1499 the chain carries O-(5'-phospho-RNA)-tyrosine. Residues D1514–F1728 form the Peptidase C3 domain. Residues H1563, D1603, and C1691 each act as for protease 3C activity in the active site. In terms of domain architecture, RdRp catalytic spans D1976–N2097.

This sequence belongs to the picornaviridae polyprotein family. As to quaternary structure, homodimer. Homomultimer; probably interacts with membranes in a multimeric form. Seems to assemble into amyloid-like fibers. Homodimer. Monomer. Interacts with protein 3CD. In terms of assembly, interacts with host ACBD3. As to quaternary structure, interacts with protein 3AB. Interacts with human MAVS. In terms of assembly, homodimer; disulfide-linked. As to quaternary structure, homopentamer. Homooligomer. Interacts with capsid protein VP2. Interacts with capsid protein VP3. In terms of assembly, interacts with capsid protein VP1. Interacts with capsid protein VP3. As to quaternary structure, interacts with capsid protein VP1. Interacts with capsid protein VP2. Post-translationally, specific enzymatic cleavages by viral protease in vivo yield a variety of precursors and mature proteins. Polyprotein processing intermediates are produced, such as P1-2A which is a functional precursor of the structural proteins, VP0 which is a VP4-VP2 precursor, VP1-2A precursor, 3ABC precursor which is a stable and catalytically active precursor of 3A, 3B and 3C proteins, 3AB and 3CD precursors. The assembly signal 2A is removed from VP1-2A by a host protease, possibly host Cathepsin L. This cleavage occurs over a region of 3 amino-acids probably generating VP1 proteins with heterogeneous C-termini. During virion maturation, immature virions are rendered infectious following cleavage of VP0 into VP4 and VP2. This maturation seems to be an autocatalytic event triggered by the presence of RNA in the capsid and is followed by a conformational change of the particle. In terms of processing, the assembly signal 2A is removed from VP1-2A by a host protease, possibly host Cathepsin L in naked virions. This cleavage does not occur in enveloped virions. This cleavage occurs over a region of 3 amino-acids probably generating VP1 proteins with heterogeneous C-termini. Post-translationally, VPg is uridylylated prior to priming replication into VPg-pUpU. Unlike other picornaviruses, does not seem to be myristoylated.

The protein resides in the virion. Its subcellular location is the host endosome. The protein localises to the host multivesicular body. It localises to the host membrane. It is found in the host mitochondrion outer membrane. The protein resides in the host cytoplasm. Its subcellular location is the host cytoplasmic vesicle membrane. It catalyses the reaction RNA(n) + a ribonucleoside 5'-triphosphate = RNA(n+1) + diphosphate. It carries out the reaction a ribonucleoside 5'-triphosphate + H2O = a ribonucleoside 5'-diphosphate + phosphate + H(+). The enzyme catalyses Selective cleavage of Gln-|-Gly bond in the poliovirus polyprotein. In other picornavirus reactions Glu may be substituted for Gln, and Ser or Thr for Gly.. Functionally, capsid proteins VP1, VP2, and VP3 form a closed capsid enclosing the viral positive strand RNA genome. All these proteins contain a beta-sheet structure called beta-barrel jelly roll. Together they form an icosahedral capsid (T=3) composed of 60 copies of each VP1, VP2, and VP3, with a diameter of approximately 300 Angstroms. VP1 is situated at the 12 fivefold axes, whereas VP2 and VP3 are located at the quasi-sixfold axes. The naked capsid interacts with the host receptor HAVCR1 to provide virion attachment to and probably entry into the target cell. In terms of biological role, VP0 precursor is a component of the immature procapsids. Its function is as follows. Plays a role in the assembly of the 12 pentamers into an icosahedral structure. Has not been detected in mature virions, supposedly owing to its small size. Precursor component of immature procapsids that corresponds to an extended form of the structural protein VP1. After maturation, possibly by the host Cathepsin L, the assembly signal 2A is cleaved to give rise to the mature VP1 protein. Functionally, functions as a viroporin. Affects membrane integrity and causes an increase in membrane permeability. Involved in host intracellular membrane rearrangements probably to give rise to the viral factories. Does not disrupt calcium homeostasis or glycoprotein trafficking. Antagonizes the innate immune response of the host by suppressing IFN-beta synthesis, which it achieves by interfering with the RIG-I/IFIH1 pathway. In terms of biological role, affects membrane integrity and causes an increase in membrane permeability. Its function is as follows. Associates with and induces structural rearrangements of intracellular membranes. Displays RNA-binding activity. The precursor 3ABC is targeted to the mitochondrial membrane where protease 3C activity cleaves and inhibits the host antiviral protein MAVS, thereby disrupting activation of IRF3 through the IFIH1/MDA5 pathway. In vivo, the protease activity of 3ABC precursor is more efficient in cleaving the 2BC precursor than that of protein 3C. The 3ABC precursor may therefore play a role in the proteolytic processing of the polyprotein. Possible viroporin. Functionally, interacts with the 3CD precursor and with RNA structures found at both the 5'- and 3'-termini of the viral genome. Since the 3AB precursor contains the hydrophobic domain 3A, it probably anchors the whole viral replicase complex to intracellular membranes on which viral RNA synthesis occurs. In terms of biological role, may serve as membrane anchor to the 3AB and 3ABC precursors via its hydrophobic domain. May interact with RNA. Its function is as follows. Acts as a primer for viral RNA replication and remains covalently bound to viral genomic RNA. VPg is uridylylated prior to priming replication into VPg-pUpU. The VPg-pUpU is then used as primer on the genomic RNA poly(A) by the RNA-dependent RNA polymerase to replicate the viral genome. Cysteine protease that generates mature viral proteins from the precursor polyprotein. In addition to its proteolytic activity, it binds to viral RNA, and thus influences viral genome replication. RNA and substrate bind cooperatively to the protease. Cleaves IKBKG/NEMO to impair innate immune signaling. Cleaves host PABPC1 which may participate in the switch of viral translation to RNA synthesis. Functionally, interacts with the 3AB precursor and with RNA structures found at both the 5'- and 3'-termini of the viral genome. Disrupts TLR3 signaling by degrading the host adapter protein TICAM1/TRIF. In terms of biological role, replicates genomic and antigenomic RNA by recognizing replications specific signals. In Cercopithecus hamlyni (Owl-faced monkey), this protein is Genome polyprotein.